Here is an 87-residue protein sequence, read N- to C-terminus: Small ribosomal subunit protein bS20 (87 aa).

The segment at 1 to 28 is disordered; sequence MANSAQARKRARQASAQRDHNMSQRSEL. Residues 17-28 are compositionally biased toward basic and acidic residues; the sequence is QRDHNMSQRSEL.

Belongs to the bacterial ribosomal protein bS20 family.

Its function is as follows. Binds directly to 16S ribosomal RNA. The sequence is that of Small ribosomal subunit protein bS20 from Thiobacillus denitrificans (strain ATCC 25259 / T1).